We begin with the raw amino-acid sequence, 369 residues long: NADH-quinone oxidoreductase subunit H (369 aa).

Helical transmembrane passes span 20-40 (VLLIKIMAVIISVMVSVAYLV), 88-108 (ICFLIAPIITFTLALLGWAVI), 133-153 (IGVLYILAISSLGVYGIIIAG), 179-199 (IGLTIVTVLLATGSLKLGEIV), 205-225 (MPYWIDLLLLPMACVFFISSL), 267-287 (ILINAMAVIFFFGGWYPPLNI), 293-313 (IPGIIWFVLKIIVLLFCFIWI), and 328-348 (LGWKVFLPISLLWVVLVSGVL).

Belongs to the complex I subunit 1 family. In terms of assembly, NDH-1 is composed of 14 different subunits. Subunits NuoA, H, J, K, L, M, N constitute the membrane sector of the complex.

Its subcellular location is the cell inner membrane. It catalyses the reaction a quinone + NADH + 5 H(+)(in) = a quinol + NAD(+) + 4 H(+)(out). In terms of biological role, NDH-1 shuttles electrons from NADH, via FMN and iron-sulfur (Fe-S) centers, to quinones in the respiratory chain. The immediate electron acceptor for the enzyme in this species is believed to be ubiquinone. Couples the redox reaction to proton translocation (for every two electrons transferred, four hydrogen ions are translocated across the cytoplasmic membrane), and thus conserves the redox energy in a proton gradient. This subunit may bind ubiquinone. This is NADH-quinone oxidoreductase subunit H from Ehrlichia canis (strain Jake).